Here is a 38-residue protein sequence, read N- to C-terminus: Photosystem II reaction center protein L (38 aa).

A helical membrane pass occupies residues 17–37; that stretch reads SLFWGLLLIFVLAVLFSSYFF.

It belongs to the PsbL family. PSII is composed of 1 copy each of membrane proteins PsbA, PsbB, PsbC, PsbD, PsbE, PsbF, PsbH, PsbI, PsbJ, PsbK, PsbL, PsbM, PsbT, PsbX, PsbY, PsbZ, Psb30/Ycf12, at least 3 peripheral proteins of the oxygen-evolving complex and a large number of cofactors. It forms dimeric complexes.

It localises to the plastid. The protein localises to the chloroplast thylakoid membrane. In terms of biological role, one of the components of the core complex of photosystem II (PSII). PSII is a light-driven water:plastoquinone oxidoreductase that uses light energy to abstract electrons from H(2)O, generating O(2) and a proton gradient subsequently used for ATP formation. It consists of a core antenna complex that captures photons, and an electron transfer chain that converts photonic excitation into a charge separation. This subunit is found at the monomer-monomer interface and is required for correct PSII assembly and/or dimerization. This Rhodomonas salina (Cryptomonas salina) protein is Photosystem II reaction center protein L.